The primary structure comprises 110 residues: Large ribosomal subunit protein uL22 (110 aa).

It belongs to the universal ribosomal protein uL22 family. As to quaternary structure, part of the 50S ribosomal subunit.

In terms of biological role, this protein binds specifically to 23S rRNA; its binding is stimulated by other ribosomal proteins, e.g. L4, L17, and L20. It is important during the early stages of 50S assembly. It makes multiple contacts with different domains of the 23S rRNA in the assembled 50S subunit and ribosome. Its function is as follows. The globular domain of the protein is located near the polypeptide exit tunnel on the outside of the subunit, while an extended beta-hairpin is found that lines the wall of the exit tunnel in the center of the 70S ribosome. This chain is Large ribosomal subunit protein uL22, found in Mycoplasmopsis pulmonis (strain UAB CTIP) (Mycoplasma pulmonis).